A 198-amino-acid chain; its full sequence is Beta-crystallin A1-1 (198 aa).

The interval 1–13 (MAQINPLPVPLGP) is N-terminal arm. 2 consecutive Beta/gamma crystallin 'Greek key' domains span residues 14–53 (WKITVYDQENFQGKRMEFTSSCTNIMECGFDNIRSLKVEC) and 54–100 (GAWI…RPIC). Residues 101-106 (SANHKE) are connecting peptide. 2 Beta/gamma crystallin 'Greek key' domains span residues 107-148 (SKLV…KVQC) and 149-197 (GAWV…RRIQ).

Belongs to the beta/gamma-crystallin family. Homo/heterodimer, or complexes of higher-order. The structure of beta-crystallin oligomers seems to be stabilized through interactions between the N-terminal arms. The N-terminus is blocked.

Functionally, crystallins are the dominant structural components of the vertebrate eye lens. The polypeptide is Beta-crystallin A1-1 (Aquarana catesbeiana (American bullfrog)).